The following is a 120-amino-acid chain: Large ribosomal subunit protein uL22 (120 aa).

The interval 1 to 25 is disordered; sequence MFVNKKYTAKGKNLPSSPKKVRPIA.

The protein belongs to the universal ribosomal protein uL22 family. In terms of assembly, part of the 50S ribosomal subunit.

In terms of biological role, this protein binds specifically to 23S rRNA; its binding is stimulated by other ribosomal proteins, e.g. L4, L17, and L20. It is important during the early stages of 50S assembly. It makes multiple contacts with different domains of the 23S rRNA in the assembled 50S subunit and ribosome. Its function is as follows. The globular domain of the protein is located near the polypeptide exit tunnel on the outside of the subunit, while an extended beta-hairpin is found that lines the wall of the exit tunnel in the center of the 70S ribosome. This chain is Large ribosomal subunit protein uL22, found in Borrelia duttonii (strain Ly).